The chain runs to 301 residues: ATP synthase gamma chain (301 aa).

It belongs to the ATPase gamma chain family. In terms of assembly, F-type ATPases have 2 components, CF(1) - the catalytic core - and CF(0) - the membrane proton channel. CF(1) has five subunits: alpha(3), beta(3), gamma(1), delta(1), epsilon(1). CF(0) has three main subunits: a, b and c.

Its subcellular location is the cell inner membrane. Functionally, produces ATP from ADP in the presence of a proton gradient across the membrane. The gamma chain is believed to be important in regulating ATPase activity and the flow of protons through the CF(0) complex. This chain is ATP synthase gamma chain, found in Bordetella petrii (strain ATCC BAA-461 / DSM 12804 / CCUG 43448).